A 748-amino-acid polypeptide reads, in one-letter code: Junctophilin-3 (748 aa).

At 1–727 (MSSGGRFNFD…LKSSTGSAPI (727 aa)) the chain is on the cytoplasmic side. 6 MORN repeats span residues 15 to 37 (YCGGWEDGKAHGHGVCTGPKGQG), 39 to 60 (YTGSWSHGFEVLGVYTWPSGNT), 61 to 82 (YQGTWAQGKRHGIGLESKGKWV), 83 to 105 (YKGEWTHGFKGRYGVRECAGNGA), 107 to 129 (YEGTWSNGLQDGYGTETYSDGGT), and 130 to 152 (YQGQWVGGMRQGYGVRQSVPYGM). The tract at residues 230–259 (SKSSLASQRSKQSSFRSEAGMSTVSSTASD) is disordered. Positions 231–244 (KSSLASQRSKQSSF) are enriched in low complexity. The segment covering 249–259 (GMSTVSSTASD) has biased composition (polar residues). MORN repeat units follow at residues 288-310 (YVGEWKNDKRSGFGVSQRSDGLK) and 311-333 (YEGEWASNRRHGYGCMTFPDGTK). The segment at 416–496 (AKEFSPSFQH…TPPPAPAARN (81 aa)) is disordered. S440 bears the Phosphoserine mark. Polar residues predominate over residues 448–457 (STGTPLQQES). T451 carries the post-translational modification Phosphothreonine. S457 carries the phosphoserine modification. Residue T471 is modified to Phosphothreonine. 2 positions are modified to phosphoserine: S475 and S506. Disordered stretches follow at residues 526–597 (CARS…SPGG) and 624–649 (HPQKRRYSKGGACRGLGDDHRPEDRG). Residues 639 to 649 (LGDDHRPEDRG) show a composition bias toward basic and acidic residues. 2 positions are modified to phosphoserine: S703 and S710. Residues 728–748 (LVVMVILLNIGVAILFINFFI) traverse the membrane as a helical; Anchor for type IV membrane protein segment.

This sequence belongs to the junctophilin family. As to expression, specifically expressed in brain.

The protein resides in the cell membrane. Its subcellular location is the endoplasmic reticulum membrane. Functionally, junctophilins contribute to the formation of junctional membrane complexes (JMCs) which link the plasma membrane with the endoplasmic or sarcoplasmic reticulum in excitable cells. Provides a structural foundation for functional cross-talk between the cell surface and intracellular calcium release channels. JPH3 is brain-specific and appears to have an active role in certain neurons involved in motor coordination and memory. This Homo sapiens (Human) protein is Junctophilin-3 (JPH3).